Reading from the N-terminus, the 480-residue chain is Pre-glycoprotein polyprotein GP complex (480 aa).

G2 carries the N-myristoyl glycine; by host lipid modification. The Extracellular segment spans residues 2–17 (GQLVSFFQEIPVFFQE). Residues 18–33 (ALNIALAVVTLLAIVK) form a helical membrane-spanning segment. Residues 34-58 (GVLNLWKSGLFQLLMFLILAGRSCS) are Cytoplasmic-facing. Residue C57 participates in Zn(2+) binding. Residues 59–419 (FRIGYHTSFE…QGRTPLTLVD (361 aa)) are Extracellular-facing. Cystine bridges form between C85–C221, C266–C279, C288–C297, and C351–C372. 3 N-linked (GlcNAc...) asparagine; by host glycosylation sites follow: N88, N174, and N214. N-linked (GlcNAc...) asparagine; by host glycans are attached at residues N352, N360, N377, and N382. The helical transmembrane segment at 420-440 (LCFWSAVFYTTTLFLHLVGFP) threads the bilayer. Residues 441–480 (THRHISGEPCPLPHRLNRHGACNCGRFKRLKKPLVWYKHH) are Cytoplasmic-facing. Zn(2+)-binding residues include H442, H444, C450, H454, C462, C464, and H480.

This sequence belongs to the arenaviridae GPC protein family. Interacts with glycoprotein G2. Part of the GP complex (GP-C) together with glycoprotein G1 and glycoprotein G2. The GP-complex interacts with protein Z, which interacts with ribonucleocapsid; these interactions may induce virion budding. As to quaternary structure, homotrimer; disulfide-linked. In pre-fusion state, G1 homotrimers bind G2 homotrimers via ionic interactions. Part of the GP complex (GP-C) together with glycoprotein G2 and the stable signal peptide. The GP-complex interacts with protein Z, which interacts with ribonucleocapsid; these interactions may induce virion budding. In terms of assembly, homotrimer. Interacts with the stable signal peptide. In pre-fusion state, G2 homotrimers bind G1 homotrimers via ionic interactions. Part of the GP complex (GP-C) together with glycoprotein G1 and the stable signal peptide. Acidification in the endosome triggers rearrangements, which ultimately leads to a 6 helix bundle formed by the two heptad repeat domains (HR1 and HR2) in post-fusion state. The GP-complex interacts with protein Z, which interacts with ribonucleocapsid; these interactions may induce virion budding. Specific enzymatic cleavages in vivo yield mature proteins. GP-C polyprotein is cleaved in the endoplasmic reticulum by the host protease MBTPS1. Only cleaved glycoprotein is incorporated into virions. Post-translationally, the SSP remains stably associated with the GP complex following cleavage by signal peptidase and plays crucial roles in the trafficking of GP through the secretory pathway. In terms of processing, myristoylation is necessary for GP2-mediated fusion activity.

It is found in the virion membrane. Its subcellular location is the host endoplasmic reticulum membrane. The protein resides in the host Golgi apparatus membrane. It localises to the host cell membrane. Its function is as follows. Functions as a cleaved signal peptide that is retained as the third component of the GP complex (GP-C). Helps to stabilize the spike complex in its native conformation. The SSP is required for efficient glycoprotein expression, post-translational maturation cleavage of G1 and G2, glycoprotein transport to the cell surface plasma membrane, formation of infectious virus particles, and acid pH-dependent glycoprotein-mediated cell fusion. Forms the virion spikes together with glycoprotein G2. The glycoprotein spike trimers are connected to the underlying matrix. Interacts with the host receptor leading to virus endocytosis. Functionally, forms the virion spikes together with glycoprotein G1. The glycoprotein spike trimers are connected to the underlying matrix. Class I viral fusion protein that directs fusion of viral and host endosomal membranes, leading to delivery of the nucleocapsid into the cytoplasm. Membrane fusion is mediated by irreversible conformational changes induced by acidification. In Cupixi mammarenavirus (isolate Rat/Brasil/BeAn 119303/1970) (CPXV), this protein is Pre-glycoprotein polyprotein GP complex.